The primary structure comprises 177 residues: MIIAVTGTPGVGKTTISKLLAEKLGYEYVNLRDYALEKGIGEMKENELEIDVDELREAFGRDFKGKNVVADGHLSHFLKADLVIVLRANPKLIAERLKERGYGREKLGENVEAELVDVILVEALEENENVIEVDTTGKTPEEVVEEILNLIRRGVKRRVGIVDWSEVYDEVLPYLRL.

5 residues coordinate ATP: G10, G12, K13, T14, and T15. The NMP stretch occupies residues 30–50 (NLRDYALEKGIGEMKENELEI). The LID stretch occupies residues 99–109 (ERGYGREKLGE). R100 and K138 together coordinate ATP.

Belongs to the adenylate kinase family. AK6 subfamily. As to quaternary structure, interacts with uS11. Not a structural component of 40S pre-ribosomes, but transiently interacts with them by binding to uS11.

It carries out the reaction AMP + ATP = 2 ADP. It catalyses the reaction ATP + H2O = ADP + phosphate + H(+). In terms of biological role, broad-specificity nucleoside monophosphate (NMP) kinase that catalyzes the reversible transfer of the terminal phosphate group between nucleoside triphosphates and monophosphates. Also has ATPase activity. Involved in the late maturation steps of the 30S ribosomal particles, specifically 16S rRNA maturation. While NMP activity is not required for ribosome maturation, ATPase activity is. Associates transiently with small ribosomal subunit protein uS11. ATP hydrolysis breaks the interaction with uS11. May temporarily remove uS11 from the ribosome to enable a conformational change of the ribosomal RNA that is needed for the final maturation step of the small ribosomal subunit. The chain is Putative adenylate kinase from Thermococcus kodakarensis (strain ATCC BAA-918 / JCM 12380 / KOD1) (Pyrococcus kodakaraensis (strain KOD1)).